A 245-amino-acid polypeptide reads, in one-letter code: MASLGVNIDHIANVRQARQTVEPDPVPMALLAELGGADGITVHLREDRRHIQDRDLELLRATVRSRLNLEMAATPEMVGIALKIQPDMVTLVPERRQEVTTEGGLDVAAQQGSLKGMVDQLQVAGIPVSLFVDPVSQQLEAACKSGARWVELHTGAYAEACWANQSFELARLNEATARARSLGLRVNAGHGLTYQNVEAVAAIEGIEELNIGHTIVARSIAVGLQEAVREMKRLVQNPRREPLFG.

Residue asparagine 7 participates in 3-amino-2-oxopropyl phosphate binding. Position 9-10 (9-10) interacts with 1-deoxy-D-xylulose 5-phosphate; that stretch reads DH. Arginine 18 provides a ligand contact to 3-amino-2-oxopropyl phosphate. The Proton acceptor role is filled by histidine 43. 1-deoxy-D-xylulose 5-phosphate is bound by residues arginine 45 and histidine 50. Glutamate 70 acts as the Proton acceptor in catalysis. Threonine 100 is a 1-deoxy-D-xylulose 5-phosphate binding site. Histidine 190 serves as the catalytic Proton donor. Residues glycine 191 and 212-213 contribute to the 3-amino-2-oxopropyl phosphate site; that span reads GH.

This sequence belongs to the PNP synthase family. Homooctamer; tetramer of dimers.

The protein localises to the cytoplasm. The enzyme catalyses 3-amino-2-oxopropyl phosphate + 1-deoxy-D-xylulose 5-phosphate = pyridoxine 5'-phosphate + phosphate + 2 H2O + H(+). It functions in the pathway cofactor biosynthesis; pyridoxine 5'-phosphate biosynthesis; pyridoxine 5'-phosphate from D-erythrose 4-phosphate: step 5/5. In terms of biological role, catalyzes the complicated ring closure reaction between the two acyclic compounds 1-deoxy-D-xylulose-5-phosphate (DXP) and 3-amino-2-oxopropyl phosphate (1-amino-acetone-3-phosphate or AAP) to form pyridoxine 5'-phosphate (PNP) and inorganic phosphate. This is Pyridoxine 5'-phosphate synthase from Prochlorococcus marinus (strain MIT 9303).